The following is a 389-amino-acid chain: Succinate--CoA ligase [ADP-forming] subunit beta (389 aa).

Residues 9-244 (KQLLAEYGIP…KTQEDETEVT (236 aa)) form the ATP-grasp domain. ATP-binding positions include Lys46, 53–55 (GRG), Gly102, and Glu107. Mg(2+) is bound by residues Asn199 and Asp213. Substrate contacts are provided by residues Asn264 and 321-323 (GIV).

This sequence belongs to the succinate/malate CoA ligase beta subunit family. In terms of assembly, heterotetramer of two alpha and two beta subunits. Requires Mg(2+) as cofactor.

The enzyme catalyses succinate + ATP + CoA = succinyl-CoA + ADP + phosphate. It catalyses the reaction GTP + succinate + CoA = succinyl-CoA + GDP + phosphate. The protein operates within carbohydrate metabolism; tricarboxylic acid cycle; succinate from succinyl-CoA (ligase route): step 1/1. Functionally, succinyl-CoA synthetase functions in the citric acid cycle (TCA), coupling the hydrolysis of succinyl-CoA to the synthesis of either ATP or GTP and thus represents the only step of substrate-level phosphorylation in the TCA. The beta subunit provides nucleotide specificity of the enzyme and binds the substrate succinate, while the binding sites for coenzyme A and phosphate are found in the alpha subunit. This is Succinate--CoA ligase [ADP-forming] subunit beta from Xanthomonas euvesicatoria pv. vesicatoria (strain 85-10) (Xanthomonas campestris pv. vesicatoria).